The following is a 58-amino-acid chain: Small ribosomal subunit protein bS21 (58 aa).

Residues 36-58 form a disordered region; it reads EHYEKPSVKRKKKSEAARKRKFK. Positions 43-58 are enriched in basic residues; sequence VKRKKKSEAARKRKFK.

It belongs to the bacterial ribosomal protein bS21 family.

This is Small ribosomal subunit protein bS21 from Clostridium kluyveri (strain NBRC 12016).